The following is a 467-amino-acid chain: UDP-glycosyltransferase 90A2 (467 aa).

UDP-alpha-D-glucose is bound by residues serine 289, 341-343, 358-366, and 380-383; these read VDQ, HCGWNSLTE, and AAEQ.

It belongs to the UDP-glycosyltransferase family.

The polypeptide is UDP-glycosyltransferase 90A2 (UGT90A2) (Arabidopsis thaliana (Mouse-ear cress)).